The primary structure comprises 77 residues: Acyl carrier protein (77 aa).

One can recognise a Carrier domain in the interval 1-76 (MATFDDVKAV…DVVNYIDNLK (76 aa)). O-(pantetheine 4'-phosphoryl)serine is present on Ser36.

The protein belongs to the acyl carrier protein (ACP) family. 4'-phosphopantetheine is transferred from CoA to a specific serine of apo-ACP by AcpS. This modification is essential for activity because fatty acids are bound in thioester linkage to the sulfhydryl of the prosthetic group.

It is found in the cytoplasm. It functions in the pathway lipid metabolism; fatty acid biosynthesis. Carrier of the growing fatty acid chain in fatty acid biosynthesis. The chain is Acyl carrier protein from Campylobacter jejuni subsp. jejuni serotype O:6 (strain 81116 / NCTC 11828).